The sequence spans 145 residues: Neutral phospholipase A2 homolog taipoxin beta chain 1 (145 aa).

The signal sequence occupies residues 1 to 27 (MHPAHLLVLLAVCVSLLGASDIPPLPL). Intrachain disulfides connect cysteine 38/cysteine 98, cysteine 54/cysteine 144, cysteine 56/cysteine 72, cysteine 71/cysteine 125, cysteine 78/cysteine 118, cysteine 87/cysteine 111, and cysteine 105/cysteine 116.

It belongs to the phospholipase A2 family. Group I subfamily. D49 sub-subfamily. Heterotrimer of alpha, beta, and gamma chains; non-covalently linked. As to expression, expressed by the venom gland.

The protein localises to the secreted. Heterotrimer: Snake venom phospholipase A2 (PLA2) heterotrimer that acts as a potent presynaptic neurotoxin by blocking synaptic transmission and synaptic vesicle recycling. May act by binding in a calcium-dependent fashion to neurotonal pentraxin-1 (NPTX1) and neurotonal pentraxin-2 (NPTX2), but not to neuronal pentraxin receptor (NPTXR). Also binds to taipoxin-associated calcium binding protein 49 (RCN2), a protein localized in the lumen of endoplasmic reticulum. Functionally, monomer (beta chain): Snake venom phospholipase A2 homolog that is neither toxic nor enzymatically active. Does not bind calcium. The sequence is that of Neutral phospholipase A2 homolog taipoxin beta chain 1 from Oxyuranus scutellatus scutellatus (Australian taipan).